Here is a 335-residue protein sequence, read N- to C-terminus: tRNA N6-adenosine threonylcarbamoyltransferase (335 aa).

Fe cation-binding residues include H110 and H114. Residues 132–136, D165, G178, and N271 contribute to the substrate site; that span reads LVSGG. D299 is a binding site for Fe cation.

It belongs to the KAE1 / TsaD family. Fe(2+) is required as a cofactor.

It is found in the cytoplasm. The catalysed reaction is L-threonylcarbamoyladenylate + adenosine(37) in tRNA = N(6)-L-threonylcarbamoyladenosine(37) in tRNA + AMP + H(+). Functionally, required for the formation of a threonylcarbamoyl group on adenosine at position 37 (t(6)A37) in tRNAs that read codons beginning with adenine. Is involved in the transfer of the threonylcarbamoyl moiety of threonylcarbamoyl-AMP (TC-AMP) to the N6 group of A37, together with TsaE and TsaB. TsaD likely plays a direct catalytic role in this reaction. The sequence is that of tRNA N6-adenosine threonylcarbamoyltransferase from Campylobacter jejuni subsp. jejuni serotype O:23/36 (strain 81-176).